The sequence spans 166 residues: Co-chaperone protein HscB homolog (166 aa).

A J domain is found at 3 to 75; it reads QYFTLFRIEP…IDRAAYLLKT (73 aa).

Belongs to the HscB family. As to quaternary structure, interacts with HscA and stimulates its ATPase activity.

In terms of biological role, co-chaperone involved in the maturation of iron-sulfur cluster-containing proteins. Seems to help targeting proteins to be folded toward HscA. The polypeptide is Co-chaperone protein HscB homolog (Neisseria gonorrhoeae (strain NCCP11945)).